We begin with the raw amino-acid sequence, 185 residues long: Elongation factor P (185 aa).

Belongs to the elongation factor P family.

The protein resides in the cytoplasm. It functions in the pathway protein biosynthesis; polypeptide chain elongation. Functionally, involved in peptide bond synthesis. Stimulates efficient translation and peptide-bond synthesis on native or reconstituted 70S ribosomes in vitro. Probably functions indirectly by altering the affinity of the ribosome for aminoacyl-tRNA, thus increasing their reactivity as acceptors for peptidyl transferase. The chain is Elongation factor P from Staphylococcus carnosus (strain TM300).